The chain runs to 144 residues: 3-hydroxyacyl-[acyl-carrier-protein] dehydratase FabZ (144 aa).

His-51 is an active-site residue.

This sequence belongs to the thioester dehydratase family. FabZ subfamily.

The protein resides in the cytoplasm. The catalysed reaction is a (3R)-hydroxyacyl-[ACP] = a (2E)-enoyl-[ACP] + H2O. In terms of biological role, involved in unsaturated fatty acids biosynthesis. Catalyzes the dehydration of short chain beta-hydroxyacyl-ACPs and long chain saturated and unsaturated beta-hydroxyacyl-ACPs. This is 3-hydroxyacyl-[acyl-carrier-protein] dehydratase FabZ from Clostridium botulinum (strain Okra / Type B1).